A 90-amino-acid chain; its full sequence is Progonadoliberin-3 (90 aa).

A signal peptide spans 1–23 (MEASSRVTVQVLLLALVVQVTLS). Gln-24 is subject to Pyrrolidone carboxylic acid. At Gly-33 the chain carries Glycine amide.

Belongs to the GnRH family.

The protein localises to the secreted. In terms of biological role, stimulates the secretion of gonadotropins. The chain is Progonadoliberin-3 (gnrh3) from Sparus aurata (Gilthead sea bream).